The primary structure comprises 882 residues: DNA mismatch repair protein MutS (882 aa).

627-634 (GPNMAGKS) provides a ligand contact to ATP.

The protein belongs to the DNA mismatch repair MutS family.

In terms of biological role, this protein is involved in the repair of mismatches in DNA. It is possible that it carries out the mismatch recognition step. This protein has a weak ATPase activity. This Anaeromyxobacter dehalogenans (strain 2CP-C) protein is DNA mismatch repair protein MutS.